Here is a 485-residue protein sequence, read N- to C-terminus: Trigger factor (485 aa).

A PPIase FKBP-type domain is found at 171 to 256 (GDRVVIDFVG…VKAVKAPGEA (86 aa)). The disordered stretch occupies residues 443-485 (FADDEDEAAEAAAPASEAGASKGVISEGVISEGSAPSHETGAA). Residues 452–462 (EAAAPASEAGA) show a composition bias toward low complexity.

It belongs to the FKBP-type PPIase family. Tig subfamily.

It is found in the cytoplasm. It carries out the reaction [protein]-peptidylproline (omega=180) = [protein]-peptidylproline (omega=0). In terms of biological role, involved in protein export. Acts as a chaperone by maintaining the newly synthesized protein in an open conformation. Functions as a peptidyl-prolyl cis-trans isomerase. This chain is Trigger factor, found in Methylobacterium sp. (strain 4-46).